The following is a 251-amino-acid chain: Ribonuclease PH (251 aa).

Phosphate contacts are provided by residues Arg87 and 125 to 127 (GTR).

This sequence belongs to the RNase PH family. In terms of assembly, homohexameric ring arranged as a trimer of dimers.

The catalysed reaction is tRNA(n+1) + phosphate = tRNA(n) + a ribonucleoside 5'-diphosphate. In terms of biological role, phosphorolytic 3'-5' exoribonuclease that plays an important role in tRNA 3'-end maturation. Removes nucleotide residues following the 3'-CCA terminus of tRNAs; can also add nucleotides to the ends of RNA molecules by using nucleoside diphosphates as substrates, but this may not be physiologically important. Probably plays a role in initiation of 16S rRNA degradation (leading to ribosome degradation) during starvation. The polypeptide is Ribonuclease PH (Saccharopolyspora erythraea (strain ATCC 11635 / DSM 40517 / JCM 4748 / NBRC 13426 / NCIMB 8594 / NRRL 2338)).